The chain runs to 546 residues: CCA tRNA nucleotidyltransferase, mitochondrial (546 aa).

Belongs to the tRNA nucleotidyltransferase/poly(A) polymerase family.

The protein localises to the mitochondrion. Its subcellular location is the cytoplasm. The protein resides in the nucleus. The catalysed reaction is a tRNA precursor + 2 CTP + ATP = a tRNA with a 3' CCA end + 3 diphosphate. In terms of biological role, nucleotidyltransferase that catalyzes the addition and repair of the essential 3'-terminal CCA sequence in tRNAs, which is necessary for the attachment of amino acids to the 3' terminus of tRNA molecules, using CTP and ATP as substrates. tRNA 3'-terminal CCA addition is required both for tRNA processing and repair. Also involved in tRNA surveillance by mediating tandem CCA addition to generate a CCACCA at the 3' terminus of unstable tRNAs. While stable tRNAs receive only 3'-terminal CCA, unstable tRNAs are marked with CCACCA and rapidly degraded. The structural flexibility of RNA controls the choice between CCA versus CCACCA addition: following the first CCA addition cycle, nucleotide-binding to the active site triggers a clockwise screw motion, producing torque on the RNA. This ejects stable RNAs, whereas unstable RNAs are refolded while bound to the enzyme and subjected to a second CCA catalytic cycle. This is CCA tRNA nucleotidyltransferase, mitochondrial (CCA1) from Saccharomyces cerevisiae (strain ATCC 204508 / S288c) (Baker's yeast).